A 722-amino-acid chain; its full sequence is Polyribonucleotide nucleotidyltransferase (722 aa).

Aspartate 495 and aspartate 501 together coordinate Mg(2+). The KH domain maps to 562–621 (PRLLSFRIDPELIGTVIGPGGRTIKGITERTNTKIDIEDGGIVTIASHDGAAAEEAQRII). The S1 motif domain maps to 631–699 (GEIFPGSITR…NRGRINLTLR (69 aa)). A disordered region spans residues 700–722 (GVSQNGGMSNYPEPTPTPVAPLT). Residues 712-722 (EPTPTPVAPLT) are compositionally biased toward pro residues.

This sequence belongs to the polyribonucleotide nucleotidyltransferase family. Requires Mg(2+) as cofactor.

The protein resides in the cytoplasm. The enzyme catalyses RNA(n+1) + phosphate = RNA(n) + a ribonucleoside 5'-diphosphate. In terms of biological role, involved in mRNA degradation. Catalyzes the phosphorolysis of single-stranded polyribonucleotides processively in the 3'- to 5'-direction. The protein is Polyribonucleotide nucleotidyltransferase of Prochlorococcus marinus (strain NATL2A).